We begin with the raw amino-acid sequence, 430 residues long: MELLHSINDFNEAKQVIAGGVNSPVRAFKSVKGTPPFILKGKGAYLYDVDNNHYIDFVQSWGPLIFGHADEEIEENIINVLKKGTSFGTPTELETTLAKEIISCYEGLDKVRLVSSGTEATMSAIRLARAYSQKDDLIKFEGCYHGHSDSLLVKAGSGCATFGSPSSLGVPNDFSKHTLVARYNDLNSTEECFKKGDVGCVIIEPIAGNMGLVPAQKEFLLGLKALCEKYQAVLILDEVMSGFRASLSGSQEFYGVVPDLVTFGKVIGAGLPLACFGGRAEIMDLLSPIGGVYQAGTLSGNPLAVCAGLSALYKIKRDKTLYTRLNALAVRLAQGLKKSAQSYNIALETLNRGSMFGFFFNENAVRDFDDALKSDTEMFAKFHQKMLFKGVYLACSSFETGFICEPMTEEMIDLAVAKADESFDEIIKGV.

Residue K265 is modified to N6-(pyridoxal phosphate)lysine.

This sequence belongs to the class-III pyridoxal-phosphate-dependent aminotransferase family. HemL subfamily. As to quaternary structure, homodimer. Pyridoxal 5'-phosphate is required as a cofactor.

The protein localises to the cytoplasm. The enzyme catalyses (S)-4-amino-5-oxopentanoate = 5-aminolevulinate. It participates in porphyrin-containing compound metabolism; protoporphyrin-IX biosynthesis; 5-aminolevulinate from L-glutamyl-tRNA(Glu): step 2/2. In Helicobacter pylori (strain Shi470), this protein is Glutamate-1-semialdehyde 2,1-aminomutase.